The primary structure comprises 439 residues: MAFVDQAEIEVKAGKGGDGIVSFRHEKFVAMGGPFGGDGGHGGSIIFKVDEGLRTLMDFRYNRHFKAQPGGNGGTKGMTGASAEDRYIKVPQGTTVKDVETGEVLGDLLENGQELVVVKGGRGGRGNIHFATPANPAPELSENGEPGQVRKLKLELKVLADVGLVGFPSAGKSTLLSVVSNAKPKVAAYHFTTLSPNIGMVRLDDARDFVMADLPGLIEGASQGVGLGFQFLRHVERTRVVLHLVDMSGIEGNDPYTQYRKILDELGQYDETILNRPHIVVPTKMDMPDSEENLVKFRQEVAADSGLPVQPEIMPISALTREGVQPLMRLTADLLATAPVPESYRPVVEKVSNDKTYDFKPEQHNFTVEWSEETEEWVIGGAEIEKLFLMTNIQRDATIMRFGRQLRHMGVDDALRKAGAKDGDDVRINNSDFVFEFSD.

Residues 1-159 (MAFVDQAEIE…RKLKLELKVL (159 aa)) form the Obg domain. The OBG-type G domain occupies 160 to 336 (ADVGLVGFPS…LMRLTADLLA (177 aa)). GTP is bound by residues 166–173 (GFPSAGKS), 191–195 (FTTLS), 213–216 (DLPG), 283–286 (TKMD), and 317–319 (SAL). Mg(2+) contacts are provided by Ser-173 and Thr-193. The 82-residue stretch at 358 to 439 (DFKPEQHNFT…NSDFVFEFSD (82 aa)) folds into the OCT domain.

It belongs to the TRAFAC class OBG-HflX-like GTPase superfamily. OBG GTPase family. Monomer. Mg(2+) is required as a cofactor.

The protein resides in the cytoplasm. In terms of biological role, an essential GTPase which binds GTP, GDP and possibly (p)ppGpp with moderate affinity, with high nucleotide exchange rates and a fairly low GTP hydrolysis rate. Plays a role in control of the cell cycle, stress response, ribosome biogenesis and in those bacteria that undergo differentiation, in morphogenesis control. This chain is GTPase Obg, found in Leuconostoc citreum (strain KM20).